A 147-amino-acid polypeptide reads, in one-letter code: MKLYELKPAPGSKKNRKRVGRGESSGHGKTSTRGHKGQWARSGGGVRPGFEGGQMPLTRRIPKRGFKNINKKVYTEVNVEKLERFDNDTVITPELLLKERVISKIEKDGVKILGRGELTKRLIVRVQKVSEGARKKIEASGGKVEVI.

A disordered region spans residues 1 to 59 (MKLYELKPAPGSKKNRKRVGRGESSGHGKTSTRGHKGQWARSGGGVRPGFEGGQMPLTR). A compositionally biased stretch (gly residues) spans 42-52 (SGGGVRPGFEG).

It belongs to the universal ribosomal protein uL15 family. As to quaternary structure, part of the 50S ribosomal subunit.

Its function is as follows. Binds to the 23S rRNA. This is Large ribosomal subunit protein uL15 from Caldicellulosiruptor bescii (strain ATCC BAA-1888 / DSM 6725 / KCTC 15123 / Z-1320) (Anaerocellum thermophilum).